The sequence spans 260 residues: MFDIGVNLTSSQFAKDRDDVVARAFAAGVKGMLLTGTNIHESQQALKLARRYPHCWSTAGVHPHDSSQWSPASEDAIIALANQPEVVAIGECGLDFNRNFSTPQEQERAFQAQLQIAAELQIPIFMHCRDAHERFLVLLDPWLDSLPGAILHCFTGSRQQMQACVDRGLYIGITGWVCDERRGLELRELLPFIPAEKLLIETDAPYLLPRDLTPKPTSRRNEPAYLPHILERIALWRGEDPQWLAAMTDANARTLFEVVF.

Glutamate 91, histidine 127, and histidine 152 together coordinate a divalent metal cation.

Belongs to the metallo-dependent hydrolases superfamily. TatD-type hydrolase family. TatD subfamily. In terms of assembly, monomer. Requires Mg(2+) as cofactor.

It is found in the cytoplasm. In terms of biological role, 3'-5' exonuclease that prefers single-stranded DNA and RNA. May play a role in the H(2)O(2)-induced DNA damage repair. The chain is 3'-5' ssDNA/RNA exonuclease TatD from Salmonella typhimurium (strain LT2 / SGSC1412 / ATCC 700720).